A 679-amino-acid polypeptide reads, in one-letter code: UvrABC system protein B (679 aa).

Positions 31 to 414 (ENLTDGLAHQ…ELEKSGTEII (384 aa)) constitute a Helicase ATP-binding domain. Residue 44-51 (GVTGSGKT) coordinates ATP. A Beta-hairpin motif is present at residues 97–120 (YYDYYQPEAYVPSSDTFIEKDASI). The Helicase C-terminal domain occupies 436-589 (QVDDLLSEAR…QIKYNEEHGI (154 aa)). One can recognise a UVR domain in the interval 639 to 674 (QQQIKKLEQQMYKFAQDLEFEKAAAIRDQLHQLREQ).

This sequence belongs to the UvrB family. Forms a heterotetramer with UvrA during the search for lesions. Interacts with UvrC in an incision complex.

The protein localises to the cytoplasm. Functionally, the UvrABC repair system catalyzes the recognition and processing of DNA lesions. A damage recognition complex composed of 2 UvrA and 2 UvrB subunits scans DNA for abnormalities. Upon binding of the UvrA(2)B(2) complex to a putative damaged site, the DNA wraps around one UvrB monomer. DNA wrap is dependent on ATP binding by UvrB and probably causes local melting of the DNA helix, facilitating insertion of UvrB beta-hairpin between the DNA strands. Then UvrB probes one DNA strand for the presence of a lesion. If a lesion is found the UvrA subunits dissociate and the UvrB-DNA preincision complex is formed. This complex is subsequently bound by UvrC and the second UvrB is released. If no lesion is found, the DNA wraps around the other UvrB subunit that will check the other stand for damage. The polypeptide is UvrABC system protein B (Haemophilus influenzae (strain 86-028NP)).